We begin with the raw amino-acid sequence, 75 residues long: UPF0352 protein YejL (75 aa).

Belongs to the UPF0352 family.

The protein is UPF0352 protein YejL of Salmonella arizonae (strain ATCC BAA-731 / CDC346-86 / RSK2980).